The primary structure comprises 130 residues: Cytidine deaminase (130 aa).

Residues 3 to 130 (VNLEWIIKQL…ELLMNGFKKS (128 aa)) enclose the CMP/dCMP-type deaminase domain. 43–45 (NIE) is a binding site for substrate. Residue Cys54 coordinates Zn(2+). The active-site Proton donor is Glu56. Zn(2+) contacts are provided by Cys88 and Cys91.

Belongs to the cytidine and deoxycytidylate deaminase family. Homodimer. Zn(2+) serves as cofactor.

The catalysed reaction is cytidine + H2O + H(+) = uridine + NH4(+). It carries out the reaction 2'-deoxycytidine + H2O + H(+) = 2'-deoxyuridine + NH4(+). In terms of biological role, this enzyme scavenges exogenous and endogenous cytidine and 2'-deoxycytidine for UMP synthesis. The protein is Cytidine deaminase (cdd) of Mycoplasma genitalium (strain ATCC 33530 / DSM 19775 / NCTC 10195 / G37) (Mycoplasmoides genitalium).